Reading from the N-terminus, the 307-residue chain is MGTVLSLSPSYRKATLFEDGAATVGHYTAVQNSKNAKDKNLKRHSIISVLPWKRIVAVSAKKKNSKKAQPNSSYQSNIAHLNNENLKKSLSCANLSTFAQPPPAQPPAPPASQLSGSQTGVSSSVKKAPHPAITSAGTPKRVIVQASTSELLRCLGEFLCRRCYRLKHLSPTDPVLWLRSVDRSLLLQGWQDQGFITPANVVFLYMLCRDVISSEVGSDHELQAVLLTCLYLSYSYMGNEISYPLKPFLVESCKEAFWDRCLSVINLMSSKMLQINADPHYFTQVFSDLKNESGQEDKKRLLLGLDR.

Residue Gly2 is the site of N-myristoyl glycine attachment. Position 8 is a phosphoserine; by CDK5 (Ser8). The interval 97 to 133 (TFAQPPPAQPPAPPASQLSGSQTGVSSSVKKAPHPAI) is disordered. A compositionally biased stretch (pro residues) spans 100–110 (QPPPAQPPAPP). Residues 112–125 (SQLSGSQTGVSSSV) are compositionally biased toward polar residues. Residue Thr138 is modified to Phosphothreonine; by CDK5.

It belongs to the cyclin-dependent kinase 5 activator family. As to quaternary structure, heterodimer composed of a catalytic subunit CDK5 and a regulatory subunit CDK5R1 (p25) and macromolecular complex composed of at least CDK5, CDK5R1 (p35) and CDK5RAP1 or CDK5RAP2 or CDK5RAP3. Only the heterodimer shows kinase activity. Interacts with EPHA4 and NGEF; may mediate the activation of NGEF by EPHA4. Interacts with RASGRF2. The complex p35/CDK5 interacts with CLOCK. The p35 form is proteolytically cleaved by calpain, giving rise to the p25 form. P35 has a 5 to 10 fold shorter half-life compared to p25. The conversion results in deregulation of the CDK5 kinase: p25/CDK5 kinase displays an increased and altered tau phosphorylation in comparison to the p35/CDK5 kinase in vivo. In terms of processing, myristoylated. A proper myristoylation signal is essential for the proper distribution of p35. Post-translationally, phosphorylation at Ser-8 and Thr-138 by CDK5 prevents calpain-mediated proteolysis. Ubiquitinated, leading to its degradation: degradation of p35 by proteasome results in down-regulation of CDK5 activity. During this process, CDK5 phosphorylates p35 and induces its ubiquitination and subsequent degradation. Ubiquitinated by the CRL2(FEM1B) complex, which recognizes the -Gly-Leu-Asp-Arg C-degron at the C-terminus, leading to its degradation. As to expression, brain and neuron specific.

The protein resides in the cell membrane. The protein localises to the cell projection. Its subcellular location is the neuron projection. It localises to the nucleus. It is found in the cytoplasm. The protein resides in the perinuclear region. The protein localises to the perikaryon. Its function is as follows. p35 is a neuron specific activator of CDK5. The complex p35/CDK5 is required for neurite outgrowth and cortical lamination. Involved in dendritic spine morphogenesis by mediating the EFNA1-EPHA4 signaling. Activator of TPKII. The complex p35/CDK5 participates in the regulation of the circadian clock by modulating the function of CLOCK protein: phosphorylates CLOCK at 'Thr-451' and 'Thr-461' and regulates the transcriptional activity of the CLOCK-BMAL1 heterodimer in association with altered stability and subcellular distribution. In Rattus norvegicus (Rat), this protein is Cyclin-dependent kinase 5 activator 1 (Cdk5r1).